Reading from the N-terminus, the 1178-residue chain is Pyruvate carboxylase, mitochondrial (1178 aa).

A mitochondrion-targeting transit peptide spans 1–20 (MLKFQTVRGGLRLLGVRRSS). A Phosphoserine modification is found at Ser-21. An N6-acetyllysine mark is found at Lys-35 and Lys-39. In terms of domain architecture, Biotin carboxylation spans 36 to 486 (PIKKVMVANR…DTQFIDENPE (451 aa)). Lys-79 is subject to N6-acetyllysine; alternate. Lys-79 is modified (N6-succinyllysine; alternate). N6-acetyllysine is present on residues Lys-148 and Lys-152. ATP-binding residues include Lys-152 and Glu-236. Residues 156-353 (RAIAIAAGVP…LVHAQIHVSE (198 aa)) form the ATP-grasp domain. The residue at position 241 (Lys-241) is an N6-acetyllysine. His-271 contacts ATP. N6-acetyllysine occurs at positions 297, 316, and 319. Arg-328 is a catalytic residue. Position 434 is an N6-acetyllysine (Lys-434). Position 442 is an N6-succinyllysine (Lys-442). A Pyruvate carboxyltransferase domain is found at 563–832 (LLLMDTTFRD…DTEVPLERVF (270 aa)). Position 571–575 (571–575 (RDAHQ)) interacts with substrate. Asp-572 provides a ligand contact to Mn(2+). Lys-589 is modified (N6-acetyllysine). Residue Arg-644 coordinates substrate. Lys-661 and Lys-717 each carry N6-acetyllysine. Lys-741 contacts Mn(2+). Position 741 is an N6-carboxylysine (Lys-741). Lys-748 is subject to N6-acetyllysine. His-771 and His-773 together coordinate Mn(2+). Lys-892 carries the post-translational modification N6-acetyllysine. Thr-908 contacts substrate. Lys-969 is subject to N6-acetyllysine. N6-acetyllysine; alternate is present on Lys-988. The residue at position 988 (Lys-988) is an N6-succinyllysine; alternate. Position 992 is an N6-acetyllysine (Lys-992). At Thr-1003 the chain carries Phosphothreonine. An N6-acetyllysine mark is found at Lys-1061, Lys-1090, and Lys-1124. The 70-residue stretch at 1109–1178 (KGQIGAPMPG…EGDDLILEIE (70 aa)) folds into the Biotinyl-binding domain. Residue Lys-1144 is modified to N6-biotinyllysine.

Homotetramer. Interacts (via the biotin carboxylation domain) with SIRT4. It depends on biotin as a cofactor. Requires Mn(2+) as cofactor. In terms of processing, acetylation of Lys-316 is observed in liver mitochondria from fasted mice but not from fed mice. Acetylation of Lys-748 might play a role in catalytic activity regulation. As to expression, liver, kidney, adipose tissue, liver and brain.

The protein resides in the mitochondrion matrix. It catalyses the reaction hydrogencarbonate + pyruvate + ATP = oxaloacetate + ADP + phosphate + H(+). It participates in carbohydrate biosynthesis; gluconeogenesis. Its function is as follows. Pyruvate carboxylase catalyzes a 2-step reaction, involving the ATP-dependent carboxylation of the covalently attached biotin in the first step and the transfer of the carboxyl group to pyruvate in the second. Catalyzes in a tissue specific manner, the initial reactions of glucose (liver, kidney) and lipid (adipose tissue, liver, brain) synthesis from pyruvate. This Mus musculus (Mouse) protein is Pyruvate carboxylase, mitochondrial (Pc).